Reading from the N-terminus, the 495-residue chain is Probable cytosol aminopeptidase (495 aa).

Residues Lys267 and Asp272 each contribute to the Mn(2+) site. Lys279 is an active-site residue. Mn(2+) contacts are provided by Asp290, Asp349, and Glu351. Arg353 is an active-site residue.

It belongs to the peptidase M17 family. It depends on Mn(2+) as a cofactor.

It is found in the cytoplasm. The catalysed reaction is Release of an N-terminal amino acid, Xaa-|-Yaa-, in which Xaa is preferably Leu, but may be other amino acids including Pro although not Arg or Lys, and Yaa may be Pro. Amino acid amides and methyl esters are also readily hydrolyzed, but rates on arylamides are exceedingly low.. It carries out the reaction Release of an N-terminal amino acid, preferentially leucine, but not glutamic or aspartic acids.. In terms of biological role, presumably involved in the processing and regular turnover of intracellular proteins. Catalyzes the removal of unsubstituted N-terminal amino acids from various peptides. This Histophilus somni (strain 129Pt) (Haemophilus somnus) protein is Probable cytosol aminopeptidase.